The chain runs to 154 residues: RxLR effector protein PexRD24 (154 aa).

The signal sequence occupies residues 1-22; the sequence is MHSSLLWLGAVVALLAVNNVTA. The RxLR-dEER signature appears at 53–67; the sequence is RSLRAVETSEDEEER. K138 is a short sequence motif (PP1c-binding motif).

This sequence belongs to the RxLR effector family. In terms of assembly, interacts with the potato PP1c family proteins PP1c-1, PP1c-2 and PP1c-3.

Its subcellular location is the secreted. The protein localises to the host nucleus. It is found in the host nucleoplasm. The protein resides in the host nucleolus. In terms of biological role, effector that interacts with isoforms of host protein phosphatase type 1c (PP1c), mimicking a regulatory subunit and causing their re-localization within the host nucleus. The holoenzymes formed with PP1c isoforms act to promote late blight by attenuating jasmonic acid (JA)- and salicylic acid (SA)-mediated transcriptional responses of the host plant. This Phytophthora infestans (strain T30-4) (Potato late blight agent) protein is RxLR effector protein PexRD24.